A 74-amino-acid polypeptide reads, in one-letter code: Brevinin-2Ta (74 aa).

Positions Met-1–Cys-22 are cleaved as a signal peptide. The propeptide occupies Gln-23–Arg-41. A disulfide bridge connects residues Cys-68 and Cys-74.

This sequence belongs to the frog skin active peptide (FSAP) family. Brevinin subfamily. As to expression, expressed by the skin glands.

It localises to the secreted. Antimicrobial peptide. The chain is Brevinin-2Ta from Rana temporaria (European common frog).